The sequence spans 354 residues: MGCTLSAEERAALERSKAIEKNLKEDGISAAKDVKLLLLGAGESGKSTIVKQMKIIHEDGFSGEDVKQYKPVVYSNTIQSLAAIVRAMDTLGVEYGDKERKTDSKMVCDVVSRMEDTEPFSAELLSAMMRLWGDSGIQECFNRSREYQLNDSAKYYLDSLDRIGAGDYQPTEQDILRTRVKTTGIVETHFTFKNLHFRLFDVGGQRSERKKWIHCFEDVTAIIFCVALSGYDQVLHEDETTNRMHESLMLFDSICNNKFFIDTSIILFLNKKDLFGEKIKKSPLTICFPEYPGSNTYEDAAAYIQTQFESKNRSPNKEIYCHMTCATDTNNIQVVFDAVTDIIIANNLRGCGLY.

Residue glycine 2 is the site of N-myristoyl glycine attachment. Residue cysteine 3 is the site of S-palmitoyl cysteine attachment. Residues 32-354 form the G-alpha domain; it reads KDVKLLLLGA…ANNLRGCGLY (323 aa). The tract at residues 35–48 is G1 motif; that stretch reads KLLLLGAGESGKST. GTP-binding residues include glutamate 43, lysine 46, serine 47, threonine 48, serine 152, leucine 176, arginine 177, threonine 178, and arginine 179. Serine 47 is a binding site for Mg(2+). The interval 174-182 is G2 motif; sequence DILRTRVKT. Residue threonine 182 participates in Mg(2+) binding. The interval 197-206 is G3 motif; sequence FRLFDVGGQR. Glutamine 205 carries the 5-glutamyl histamine modification. The interval 266 to 273 is G4 motif; it reads ILFLNKKD. Residues asparagine 270, aspartate 273, and cysteine 325 each coordinate GTP. Residues 324 to 329 are G5 motif; it reads TCATDT. Cysteine 351 carries S-palmitoyl cysteine lipidation.

The protein belongs to the G-alpha family. G(i/o/t/z) subfamily. In terms of assembly, g proteins are composed of 3 units; alpha, beta and gamma. The alpha chain contains the guanine nucleotide binding site. Forms a complex with GNB1 and GNG3. Interacts with RGS14. Interacts with RGS16. Interacts with RGS19. Interacts (when palmitoylated) with ADGRG3. In terms of processing, histaminylated at Gln-205 residues by TGM2.

It is found in the cell membrane. The protein resides in the membrane. It carries out the reaction GTP + H2O = GDP + phosphate + H(+). Its activity is regulated as follows. The GTPase activity is promoted by GTPAse activators, such as RGS14, RGS16 and RGS19. In terms of biological role, guanine nucleotide-binding proteins (G proteins) function as transducers downstream of G protein-coupled receptors (GPCRs) in numerous signaling cascades. The alpha chain contains the guanine nucleotide binding site and alternates between an active, GTP-bound state and an inactive, GDP-bound state. Signaling by an activated GPCR promotes GDP release and GTP binding. The alpha subunit has a low GTPase activity that converts bound GTP to GDP, thereby terminating the signal. Both GDP release and GTP hydrolysis are modulated by numerous regulatory proteins. Signaling is mediated via effector proteins, such as adenylate cyclase. Inhibits adenylate cyclase activity, leading to decreased intracellular cAMP levels. The polypeptide is Guanine nucleotide-binding protein G(o) subunit alpha (Gnao1) (Mus musculus (Mouse)).